The following is a 349-amino-acid chain: tRNA N6-adenosine threonylcarbamoyltransferase (349 aa).

2 residues coordinate Fe cation: His113 and His117. Substrate-binding positions include 135–139 (LVSGG), Asp169, Gly182, Asp186, and Asn281. Asp309 provides a ligand contact to Fe cation.

This sequence belongs to the KAE1 / TsaD family. Requires Fe(2+) as cofactor.

The protein resides in the cytoplasm. It carries out the reaction L-threonylcarbamoyladenylate + adenosine(37) in tRNA = N(6)-L-threonylcarbamoyladenosine(37) in tRNA + AMP + H(+). Required for the formation of a threonylcarbamoyl group on adenosine at position 37 (t(6)A37) in tRNAs that read codons beginning with adenine. Is involved in the transfer of the threonylcarbamoyl moiety of threonylcarbamoyl-AMP (TC-AMP) to the N6 group of A37, together with TsaE and TsaB. TsaD likely plays a direct catalytic role in this reaction. This Corynebacterium aurimucosum (strain ATCC 700975 / DSM 44827 / CIP 107346 / CN-1) (Corynebacterium nigricans) protein is tRNA N6-adenosine threonylcarbamoyltransferase.